The chain runs to 182 residues: Adenine phosphoribosyltransferase (182 aa).

Belongs to the purine/pyrimidine phosphoribosyltransferase family. In terms of assembly, homodimer.

Its subcellular location is the cytoplasm. It catalyses the reaction AMP + diphosphate = 5-phospho-alpha-D-ribose 1-diphosphate + adenine. It participates in purine metabolism; AMP biosynthesis via salvage pathway; AMP from adenine: step 1/1. Catalyzes a salvage reaction resulting in the formation of AMP, that is energically less costly than de novo synthesis. The sequence is that of Adenine phosphoribosyltransferase from Streptomyces galbus.